We begin with the raw amino-acid sequence, 394 residues long: MLDLYEHTDKYSSKNYSPLKLALAKGRGAKVWDIEDNCYIDCISGFSVVNQGHCHPKIIKALQEQSQRITMVSRALYSDNLGKWEEKICKLANKENVLPMNTGTEAVETAIKMARKWGADIKNIDESSSEIIAMNGNFHGRTLGSLSLSSQDSYKKGFGPLLNNIHYADFGDIEQLKKLINNQTTAIILEPIQGEGGVNIPPTHFIQEVRQLCNEYNVLLIADEIQVGLGRTGKMFAMEWENTEPDIYLLGKSLGGGLYPISAVLANQDVMSVLTPGTHGSTFGGNPLACAVSMAALDVLNEEHLVQNALDLGDRLLKHLQQIESELIVEVRGRGLFIGIELNVAAQDYCEQMINKGVLCKETQGNIIRIAPPLVIDKDEIDEVIRVITEVLEK.

Position 252 is an N6-(pyridoxal phosphate)lysine (Lys252).

This sequence belongs to the class-III pyridoxal-phosphate-dependent aminotransferase family. OAT subfamily. The cofactor is pyridoxal 5'-phosphate.

It localises to the cytoplasm. The catalysed reaction is a 2-oxocarboxylate + L-ornithine = L-glutamate 5-semialdehyde + an L-alpha-amino acid. The protein operates within amino-acid biosynthesis; L-proline biosynthesis; L-glutamate 5-semialdehyde from L-ornithine: step 1/1. Its function is as follows. Catalyzes the interconversion of ornithine to glutamate semialdehyde. The protein is Ornithine aminotransferase 1 of Staphylococcus saprophyticus subsp. saprophyticus (strain ATCC 15305 / DSM 20229 / NCIMB 8711 / NCTC 7292 / S-41).